Consider the following 428-residue polypeptide: Keratin, type I cytoskeletal 18-A (428 aa).

The head stretch occupies residues 2–78 (SFRSQTSSTT…SVKGSGLFNN (77 aa)). Residues 79–114 (EKETMQILNDRLASYLETVRNLEQANSKLELQIRET) are coil 1A. The IF rod domain maps to 79 to 390 (EKETMQILND…RLLDGEDFRL (312 aa)). A linker 1 region spans residues 115 to 131 (LEKRGPTTQDYSAYEKV). Residues 132-223 (VEDLKSQIYD…RSHQTDVEEL (92 aa)) are coil 1B. A linker 12 region spans residues 224–247 (RKHISECGVQVDVDAPKGQDLSKI). The interval 248–385 (MEEIRAQYET…IATYRRLLDG (138 aa)) is coil 2. Residues 386 to 428 (EDFRLQDALAVQTTKVQKKITVTETVVDGKVVSQSSEVQEIKK) are tail.

This sequence belongs to the intermediate filament family. As to quaternary structure, heterotetramer of two type I and two type II keratins. Keratin-18 associates with keratin-8. In terms of processing, phosphorylated. Post-translationally, proteolytically cleaved by caspases during epithelial cell apoptosis.

Functionally, when phosphorylated, plays a role in filament reorganization. The polypeptide is Keratin, type I cytoskeletal 18-A (Polypterus senegalus (Senegal bichir)).